A 467-amino-acid chain; its full sequence is Ran-binding protein M homolog (467 aa).

The interval Met-1–Leu-25 is disordered. Residues Asn-9–Leu-25 show a composition bias toward polar residues. The B30.2/SPRY domain occupies Asp-31–Phe-219. One can recognise a LisH domain in the interval Pro-244–Val-276. Residues Ala-295 to Glu-353 form the CTLH domain.

It belongs to the RANBP9/10 family. Interacts with WDR36, WDS, GID8, MAEA and RMD5.

Its subcellular location is the cytoplasm. It is found in the nucleus. The protein resides in the perinuclear region. The polypeptide is Ran-binding protein M homolog (Arabidopsis thaliana (Mouse-ear cress)).